A 315-amino-acid polypeptide reads, in one-letter code: Homoserine kinase (315 aa).

Residue 96–106 (PHSRGLGSSAA) participates in ATP binding.

This sequence belongs to the GHMP kinase family. Homoserine kinase subfamily.

Its subcellular location is the cytoplasm. It catalyses the reaction L-homoserine + ATP = O-phospho-L-homoserine + ADP + H(+). Its pathway is amino-acid biosynthesis; L-threonine biosynthesis; L-threonine from L-aspartate: step 4/5. Catalyzes the ATP-dependent phosphorylation of L-homoserine to L-homoserine phosphate. The protein is Homoserine kinase of Mycobacterium leprae (strain Br4923).